We begin with the raw amino-acid sequence, 147 residues long: Large ribosomal subunit protein bL9 (147 aa).

Belongs to the bacterial ribosomal protein bL9 family.

Functionally, binds to the 23S rRNA. This chain is Large ribosomal subunit protein bL9, found in Myxococcus xanthus (strain DK1622).